Consider the following 204-residue polypeptide: Thymidylate kinase (204 aa).

Residue 11–18 (GLDKSGKT) participates in ATP binding.

Belongs to the thymidylate kinase family.

The catalysed reaction is dTMP + ATP = dTDP + ADP. It functions in the pathway pyrimidine metabolism; dTTP biosynthesis. In Cowpox virus (strain GRI-90 / Grishak) (CPV), this protein is Thymidylate kinase (TMK).